The chain runs to 89 residues: Small ribosomal subunit protein uS15 (89 aa).

Belongs to the universal ribosomal protein uS15 family. In terms of assembly, part of the 30S ribosomal subunit. Forms a bridge to the 50S subunit in the 70S ribosome, contacting the 23S rRNA.

In terms of biological role, one of the primary rRNA binding proteins, it binds directly to 16S rRNA where it helps nucleate assembly of the platform of the 30S subunit by binding and bridging several RNA helices of the 16S rRNA. Its function is as follows. Forms an intersubunit bridge (bridge B4) with the 23S rRNA of the 50S subunit in the ribosome. The sequence is that of Small ribosomal subunit protein uS15 from Shewanella sp. (strain ANA-3).